Reading from the N-terminus, the 616-residue chain is MPKYRSATTTHGRNMAGARALWRATGMTDADFGKPIIAVVNSFTQFVPGHVHLRDLGKLVAEQIEAAGGVAKEFNTIAVDDGIAMGHGGMLYSLPSRELIADSVEYMVNAHCADAMVCISNCDKITPGMLMASLRLNIPVIFVSGGPMEAGKTKLSDKIIKLDLVDAMIQGADPKVSDEQSNQVERSACPTCGSCSGMFTANSMNCLTEALGLSQPGNGSLLATHADRKELFLNAGKRIVELTKRYYEQDDASALPRNIASKAAFENAMTLDIAMGGSTNTVLHLLAAAQEAEIDFTMSDIDKLSRKVPQLCKVAPSTQKYHMEDVHRAGGVLGILGELDRAGLLNRDVKNVLGLTLPQTLEQYDVMVTQDDAVKKMFRAGPAGIRTTQAFSQDCRWDTLDDDRAEGCIRSLEHAYSKDGGLAVLYGNFAENGCIVKTAGVDDSILKFTGPAKVYESQDEAVDAILGGKVVEGDVVVIRYEGPKGGPGMQEMLYPTTFLKSMGLGKACALITDGRFSGGTSGLSIGHVSPEAASGGNIAIIEDGDMIAIDIPNRGIQLQLSDAEIAARREAQEARGDKAWTPKDRERQVSFALRAYASLATSADKGAVRDKSKLGG.

Asp81 contributes to the Mg(2+) binding site. Cys122 is a binding site for [2Fe-2S] cluster. Mg(2+)-binding residues include Asp123 and Lys124. At Lys124 the chain carries N6-carboxylysine. Cys195 serves as a coordination point for [2Fe-2S] cluster. Glu491 is a binding site for Mg(2+). Ser517 acts as the Proton acceptor in catalysis.

This sequence belongs to the IlvD/Edd family. In terms of assembly, homodimer. The cofactor is [2Fe-2S] cluster. It depends on Mg(2+) as a cofactor.

The enzyme catalyses (2R)-2,3-dihydroxy-3-methylbutanoate = 3-methyl-2-oxobutanoate + H2O. The catalysed reaction is (2R,3R)-2,3-dihydroxy-3-methylpentanoate = (S)-3-methyl-2-oxopentanoate + H2O. It functions in the pathway amino-acid biosynthesis; L-isoleucine biosynthesis; L-isoleucine from 2-oxobutanoate: step 3/4. Its pathway is amino-acid biosynthesis; L-valine biosynthesis; L-valine from pyruvate: step 3/4. Functionally, functions in the biosynthesis of branched-chain amino acids. Catalyzes the dehydration of (2R,3R)-2,3-dihydroxy-3-methylpentanoate (2,3-dihydroxy-3-methylvalerate) into 2-oxo-3-methylpentanoate (2-oxo-3-methylvalerate) and of (2R)-2,3-dihydroxy-3-methylbutanoate (2,3-dihydroxyisovalerate) into 2-oxo-3-methylbutanoate (2-oxoisovalerate), the penultimate precursor to L-isoleucine and L-valine, respectively. In Klebsiella pneumoniae (strain 342), this protein is Dihydroxy-acid dehydratase.